Reading from the N-terminus, the 399-residue chain is Chorismate synthase (399 aa).

Positions Ile-41 to Gln-72 are disordered. Arg-48 contributes to the NADP(+) binding site. FMN is bound by residues Arg-125–Ser-127, Gly-288, His-303–Ser-307, and Arg-330. Composition is skewed to basic and acidic residues over residues Pro-363 to Tyr-377 and Ala-389 to Asp-399. A disordered region spans residues Pro-363–Asp-399.

It belongs to the chorismate synthase family. FMNH2 is required as a cofactor.

The enzyme catalyses 5-O-(1-carboxyvinyl)-3-phosphoshikimate = chorismate + phosphate. The protein operates within metabolic intermediate biosynthesis; chorismate biosynthesis; chorismate from D-erythrose 4-phosphate and phosphoenolpyruvate: step 7/7. In terms of biological role, catalyzes the anti-1,4-elimination of the C-3 phosphate and the C-6 proR hydrogen from 5-enolpyruvylshikimate-3-phosphate (EPSP) to yield chorismate, which is the branch point compound that serves as the starting substrate for the three terminal pathways of aromatic amino acid biosynthesis. This reaction introduces a second double bond into the aromatic ring system. The polypeptide is Chorismate synthase (Haloarcula marismortui (strain ATCC 43049 / DSM 3752 / JCM 8966 / VKM B-1809) (Halobacterium marismortui)).